The sequence spans 488 residues: Altronate oxidoreductase (488 aa).

18 to 29 (VIQFGEGNFLRA) is an NAD(+) binding site.

This sequence belongs to the mannitol dehydrogenase family. UxaB subfamily.

It carries out the reaction D-altronate + NAD(+) = keto-D-tagaturonate + NADH + H(+). It functions in the pathway carbohydrate metabolism; pentose and glucuronate interconversion. This Pectobacterium carotovorum subsp. carotovorum (strain PC1) protein is Altronate oxidoreductase.